We begin with the raw amino-acid sequence, 176 residues long: Dual-action ribosomal maturation protein DarP (176 aa).

Acidic residues predominate over residues 1 to 16; sequence MRLIDPDADLEFDPDS. The disordered stretch occupies residues 1–29; the sequence is MRLIDPDADLEFDPDSVYDGPSKSQKKRE.

Belongs to the DarP family.

The protein localises to the cytoplasm. Member of a network of 50S ribosomal subunit biogenesis factors which assembles along the 30S-50S interface, preventing incorrect 23S rRNA structures from forming. Promotes peptidyl transferase center (PTC) maturation. This chain is Dual-action ribosomal maturation protein DarP, found in Thiobacillus denitrificans (strain ATCC 25259 / T1).